The sequence spans 460 residues: Argininosuccinate lyase (460 aa).

This sequence belongs to the lyase 1 family. Argininosuccinate lyase subfamily.

Its subcellular location is the cytoplasm. It carries out the reaction 2-(N(omega)-L-arginino)succinate = fumarate + L-arginine. It participates in amino-acid biosynthesis; L-arginine biosynthesis; L-arginine from L-ornithine and carbamoyl phosphate: step 3/3. This chain is Argininosuccinate lyase, found in Alkaliphilus metalliredigens (strain QYMF).